The sequence spans 382 residues: Alpha-2B adrenergic receptor (382 aa).

Residues 1–25 (AIAAVITFLILFTIFGNALVILAVL) traverse the membrane as a helical segment. Residues 26–36 (TSRSLRAPQNL) are Cytoplasmic-facing. The helical transmembrane segment at 37 to 62 (FLVSLAAADILVATLIIPFSLANELL) threads the bilayer. Topologically, residues 63–72 (GYWYFRHTWC) are extracellular. A disulfide bridge links C72 with C151. The helical transmembrane segment at 73–95 (EVYLALDVLFCTSSIVHLCAISL) threads the bilayer. Topologically, residues 96 to 117 (DRYWSVSRALEYNSKRTPRRIK) are cytoplasmic. Residues 118–140 (GIILTVWLIAAFISLPPLIYKGD) traverse the membrane as a helical segment. The Extracellular segment spans residues 141-156 (KGKKPGGRPQCKLNEE). A helical transmembrane segment spans residues 157-180 (AWYILSSSIGSFFAPCLIMILVYL). The Cytoplasmic segment spans residues 181 to 346 (RIYLIAKRRN…MNREKRFTFV (166 aa)). The disordered stretch occupies residues 192 to 305 (QGPHGKQAPG…QGTPNFQPSQ (114 aa)). A compositionally biased stretch (acidic residues) spans 271–284 (EEEEEEEEEEEEEC). A compositionally biased stretch (polar residues) spans 291–305 (TSSSLQGTPNFQPSQ). The chain crosses the membrane as a helical span at residues 347-370 (LAVVIGVFVLCWFPFFFSYSLGAI). Over 371–379 (CPQHCKVPH) the chain is Extracellular. The helical transmembrane segment at 380–382 (GLF) threads the bilayer.

This sequence belongs to the G-protein coupled receptor 1 family. Adrenergic receptor subfamily. ADRA2B sub-subfamily. As to quaternary structure, interacts with RAB26. Interacts with PPP1R9B. Interacts with GGA1, GGA2 and GGA3.

Its subcellular location is the cell membrane. Functionally, alpha-2 adrenergic receptors mediate the catecholamine-induced inhibition of adenylate cyclase through the action of G proteins. The polypeptide is Alpha-2B adrenergic receptor (ADRA2B) (Didelphis virginiana (North American opossum)).